We begin with the raw amino-acid sequence, 81 residues long: Short neurotoxin 1 (81 aa).

An N-terminal signal peptide occupies residues 1–21 (MKTLLLSPVVVTIVCLDLGYT). Intrachain disulfides connect C24-C43, C38-C60, C62-C73, and C74-C79.

Belongs to the three-finger toxin family. Short-chain subfamily. Type I alpha-neurotoxin sub-subfamily. As to expression, expressed by the venom gland.

The protein localises to the secreted. Functionally, binds to muscle nicotinic acetylcholine receptor (nAChR) and inhibit acetylcholine from binding to the receptor, thereby impairing neuromuscular transmission. This chain is Short neurotoxin 1, found in Hydrophis peronii (Spiny-headed seasnake).